A 357-amino-acid polypeptide reads, in one-letter code: Histidinol-phosphate aminotransferase 2 (357 aa).

Residue lysine 216 is modified to N6-(pyridoxal phosphate)lysine.

Belongs to the class-II pyridoxal-phosphate-dependent aminotransferase family. Histidinol-phosphate aminotransferase subfamily. As to quaternary structure, homodimer. Pyridoxal 5'-phosphate serves as cofactor.

It catalyses the reaction L-histidinol phosphate + 2-oxoglutarate = 3-(imidazol-4-yl)-2-oxopropyl phosphate + L-glutamate. It functions in the pathway amino-acid biosynthesis; L-histidine biosynthesis; L-histidine from 5-phospho-alpha-D-ribose 1-diphosphate: step 7/9. This Idiomarina loihiensis (strain ATCC BAA-735 / DSM 15497 / L2-TR) protein is Histidinol-phosphate aminotransferase 2.